We begin with the raw amino-acid sequence, 683 residues long: Solute carrier family 28 member 3 (683 aa).

Residues 1-71 form a disordered region; sequence MSAFKARGVE…EEEEEGEEDQ (71 aa). Over 1–97 the chain is Cytoplasmic; that stretch reads MSAFKARGVE…FYKRNKKIIH (97 aa). Positions 60-71 are enriched in acidic residues; that stretch reads DNEEEEEGEEDQ. A helical transmembrane segment spans residues 98–118; the sequence is YTFLGLLLVGYFALVIAACIV. Topologically, residues 119 to 123 are extracellular; sequence NFKQS. The chain crosses the membrane as a helical span at residues 124–144; sequence LALLVLTLIAIFFFFWDLFIA. At 145–168 the chain is on the cytoplasmic side; that stretch reads KYGDKIAEALKPCQKFLDNHWSII. Residues 169–189 form a helical membrane-spanning segment; the sequence is RWFVYGALLLAVILWLTLDTA. Over 190 to 192 the chain is Extracellular; it reads KRG. A helical membrane pass occupies residues 193–214; sequence ANQVIPFFGLILYILLVFIFSK. The Cytoplasmic segment spans residues 215-222; it reads HPTKVRWR. A helical membrane pass occupies residues 223 to 242; the sequence is IVIWGLLLQFIFGLIILRTK. Residues 243–279 lie on the Extracellular side of the membrane; that stretch reads PGLDAFNWLGIQVQTFLKYTDAGSRFLFGDDFQDHFF. Residues 280 to 300 traverse the membrane as a helical segment; that stretch reads AFAVLPIVIFFSTVMSMMYYL. The Cytoplasmic segment spans residues 301-324; it reads GLMQWLILKVGWLMQITMGTSPME. The segment at residues 325–343 is an intramembrane region (helical); the sequence is SMVSAGNIFVGQTESPLLI. The Cytoplasmic portion of the chain corresponds to 344–356; the sequence is RPYLADLTISEMH. Residues 357–379 form a helical membrane-spanning segment; that stretch reads SVMSSGFATIAGSVLGAYISLGI. Over 380-381 the chain is Extracellular; it reads PA. Residues 382–403 traverse the membrane as a helical segment; the sequence is AHLLTASVMSAPAALAISKTFW. Over 404–438 the chain is Cytoplasmic; sequence PETKKSKNSTQTSIKLEKGQENNLVEAASQGASAA. The chain crosses the membrane as a helical span at residues 439 to 464; the sequence is VPLVANIAANLIAFLAVLAFINATLS. Topologically, residues 465–502 are extracellular; the sequence is WLGSMFNYPQFSFEIICSYVLMPFAFMMGVNYDDSFLV. Residues 503–522 constitute an intramembrane region (helical); that stretch reads AELLGMKTFFNEFVAYQRLS. Topologically, residues 523-561 are extracellular; sequence EYIHNRESGGPLFVDGVRQYMSVRSEAIATYALCGFANF. Residues 562–572 traverse the membrane as a helical segment; that stretch reads GSLGIMIGGLS. Over 573–585 the chain is Cytoplasmic; sequence SLAPHRKSDIASC. The helical transmembrane segment at 586-608 threads the bilayer; it reads GIRALIAGTIACFSTACIAGVLY. At 609-683 the chain is on the extracellular side; the sequence is IPELYCPNLL…GFNCSEVRPE (75 aa).

Belongs to the concentrative nucleoside transporter (CNT) (TC 2.A.41) family. Homotrimer.

It is found in the cell membrane. The catalysed reaction is thymidine(out) + 2 Na(+)(out) = thymidine(in) + 2 Na(+)(in). It catalyses the reaction cytidine(out) + 2 Na(+)(out) = cytidine(in) + 2 Na(+)(in). The enzyme catalyses uridine(out) + 2 Na(+)(out) = uridine(in) + 2 Na(+)(in). It carries out the reaction adenosine(out) + 2 Na(+)(out) = adenosine(in) + 2 Na(+)(in). The catalysed reaction is guanosine(out) + 2 Na(+)(out) = guanosine(in) + 2 Na(+)(in). It catalyses the reaction inosine(out) + 2 Na(+)(out) = inosine(in) + 2 Na(+)(in). Sodium-dependent, pyrimidine- and purine-selective. Involved in the homeostasis of endogenous nucleosides. Exhibits the transport characteristics of the nucleoside transport system cib or N3 subtype (N3/cib) (with marked transport of both thymidine and inosine). Employs a 2:1 sodium/nucleoside ratio. Also able to transport gemcitabine, 3'-azido-3'-deoxythymidine (AZT), ribavirin and 3-deazauridine. The polypeptide is Solute carrier family 28 member 3 (SLC28A3) (Eptatretus stoutii (Pacific hagfish)).